A 553-amino-acid chain; its full sequence is Putative transport protein CKO_00031 (553 aa).

5 consecutive transmembrane segments (helical) span residues Ile4 to Ile24, Gly28 to Asp48, Phe65 to Ser85, Leu95 to Phe115, and Met158 to Met178. RCK C-terminal domains follow at residues Gln192–Gln276 and Asp279–Asn361. Transmembrane regions (helical) follow at residues Met371–Val391, Gly393–Leu413, Leu437–Thr457, Leu464–Leu484, Tyr493–Ala513, and Leu533–Gly553.

It belongs to the AAE transporter (TC 2.A.81) family. YidE subfamily.

Its subcellular location is the cell membrane. The polypeptide is Putative transport protein CKO_00031 (Citrobacter koseri (strain ATCC BAA-895 / CDC 4225-83 / SGSC4696)).